The following is a 177-amino-acid chain: Putative pre-16S rRNA nuclease (177 aa).

The disordered stretch occupies residues 1 to 20 (MVATQQGPDRPGIDDPGRGR).

Belongs to the YqgF nuclease family.

It localises to the cytoplasm. Its function is as follows. Could be a nuclease involved in processing of the 5'-end of pre-16S rRNA. This Rhodococcus erythropolis (strain PR4 / NBRC 100887) protein is Putative pre-16S rRNA nuclease.